We begin with the raw amino-acid sequence, 701 residues long: Methionine--tRNA ligase (701 aa).

A 'HIGH' region motif is present at residues 13–23; it reads PYANGSIHLGH. Residues Cys144, Cys147, Cys157, and Cys160 each coordinate Zn(2+). A 'KMSKS' region motif is present at residues 336–340; sequence KMSKS. ATP is bound at residue Lys339. The tRNA-binding domain occupies 600–701; sequence DFSKIDLRIA…SGAQPGMRVK (102 aa).

Belongs to the class-I aminoacyl-tRNA synthetase family. MetG type 1 subfamily. As to quaternary structure, homodimer. Zn(2+) serves as cofactor.

It localises to the cytoplasm. The enzyme catalyses tRNA(Met) + L-methionine + ATP = L-methionyl-tRNA(Met) + AMP + diphosphate. Functionally, is required not only for elongation of protein synthesis but also for the initiation of all mRNA translation through initiator tRNA(fMet) aminoacylation. This Nitrosomonas eutropha (strain DSM 101675 / C91 / Nm57) protein is Methionine--tRNA ligase.